The chain runs to 181 residues: Thymidine kinase (181 aa).

13–20 (GPMFSGKS) is an ATP binding site. The active-site Proton acceptor is E85. F115 contributes to the substrate binding site. C140 and C143 together coordinate Zn(2+). 159 to 163 (IEIIG) provides a ligand contact to substrate. 2 residues coordinate Zn(2+): C172 and C175.

It belongs to the thymidine kinase family.

It carries out the reaction thymidine + ATP = dTMP + ADP + H(+). The sequence is that of Thymidine kinase (TK) from Yaba monkey tumor virus (strain VR587) (YMTV).